Reading from the N-terminus, the 361-residue chain is Chorismate synthase (361 aa).

Residues arginine 48 and arginine 54 each coordinate NADP(+). Residues 125 to 127, 238 to 239, glycine 278, 293 to 297, and arginine 319 contribute to the FMN site; these read RSS, NA, and KPTSS.

It belongs to the chorismate synthase family. Homotetramer. The cofactor is FMNH2.

It carries out the reaction 5-O-(1-carboxyvinyl)-3-phosphoshikimate = chorismate + phosphate. It functions in the pathway metabolic intermediate biosynthesis; chorismate biosynthesis; chorismate from D-erythrose 4-phosphate and phosphoenolpyruvate: step 7/7. In terms of biological role, catalyzes the anti-1,4-elimination of the C-3 phosphate and the C-6 proR hydrogen from 5-enolpyruvylshikimate-3-phosphate (EPSP) to yield chorismate, which is the branch point compound that serves as the starting substrate for the three terminal pathways of aromatic amino acid biosynthesis. This reaction introduces a second double bond into the aromatic ring system. The sequence is that of Chorismate synthase from Vibrio vulnificus (strain CMCP6).